A 193-amino-acid chain; its full sequence is BH3-interacting domain death agonist (193 aa).

The BH3 signature appears at 87–101 (IAAQLAEIGDQLDKQ).

In terms of assembly, forms heterodimers either with the pro-apoptotic protein BAX or the anti-apoptotic protein Bcl-2.

It is found in the cytoplasm. It localises to the mitochondrion outer membrane. In terms of biological role, induces caspases and apoptosis. Counters the protective effect of Bcl-2. This Gallus gallus (Chicken) protein is BH3-interacting domain death agonist (BID).